A 240-amino-acid chain; its full sequence is Ubiquitin domain-containing protein 1 (240 aa).

A disordered region spans residues 1 to 48 (MGGCVGRPQGESQRSQSRASGQQRKRAGRNEPLKKERPRWKSDYPMTD). Residues 12–22 (SQRSQSRASGQ) are compositionally biased toward low complexity. Residues 28–42 (GRNEPLKKERPRWKS) are compositionally biased toward basic and acidic residues. The region spanning 153 to 228 (FQLKVRLSTG…DTSYCKPATR (76 aa)) is the Ubiquitin-like domain.

Functionally, may be involved in the regulation of cellular senescence through a positive feedback loop with TP53. In Xenopus tropicalis (Western clawed frog), this protein is Ubiquitin domain-containing protein 1 (ubtd1).